The chain runs to 278 residues: Short-chain dehydrogenase RED2 (278 aa).

NADP(+)-binding residues include I15, D70, R132, Y178, K182, V211, and T213. Y178 (proton donor) is an active-site residue. K182 serves as the catalytic Lowers pKa of active site Tyr.

This sequence belongs to the short-chain dehydrogenases/reductases (SDR) family.

It participates in polyketide biosynthesis. In terms of biological role, short-chain dehydrogenase; part of the gene cluster that mediates the biosynthesis of pyriculol and pyriculariol, two heptaketides that induce lesion formation upon application on rice leaves but are dispensable for pathogenicity. The highly reducing polyketide synthase synthesizes the heptaketide backbone of pyriculol and pyriculariol. Pyriculol and pyriculariol contain several hydroxyl moieties and double bonds, so it can be assumed that several reduction steps occur during biosynthesis. These reactions could be executed by PKS19 itself or partly by the tailoring enzymes OXR1, OXR2, RED1, RED2 or RED3, identified within the cluster. The FAD-linked oxidoreductase OXR1 is the only tailoring enzyme for which the function has been determined yet, and is involved in the oxidation of dihydropyriculol and dihydropyriculariol into pyriculol and pyriculariol, respectively. In Pyricularia oryzae (strain 70-15 / ATCC MYA-4617 / FGSC 8958) (Rice blast fungus), this protein is Short-chain dehydrogenase RED2.